A 146-amino-acid polypeptide reads, in one-letter code: Small ribosomal subunit protein uS15 (146 aa).

Belongs to the universal ribosomal protein uS15 family. In terms of assembly, part of the 30S ribosomal subunit.

This is Small ribosomal subunit protein uS15 from Picrophilus torridus (strain ATCC 700027 / DSM 9790 / JCM 10055 / NBRC 100828 / KAW 2/3).